A 479-amino-acid chain; its full sequence is HSPB1-associated protein 1 (479 aa).

Positions 1–25 (MEAGCEGSSPQTLGERTMGEEGERV) are disordered. Residues 88–208 (ETECSYVDAT…EDTPFLYPTR (121 aa)) form an interaction with HSPB1 region. Residues 124–288 (WAYADYKYFV…HLARVEEAVT (165 aa)) enclose the JmjC domain. The interval 347-412 (PRANGEEPGV…GDSQECTSRN (66 aa)) is disordered. Basic and acidic residues predominate over residues 356 to 369 (VQEHMEVEQARDPS).

In terms of assembly, interacts with CRYAB and HSPB1. Widely expressed. Highly expressed by Sertoli cells in testis (at protein level).

The protein localises to the cytoplasm. Functionally, may play a role in cellular stress response. The sequence is that of HSPB1-associated protein 1 (Hspbap1) from Rattus norvegicus (Rat).